The sequence spans 72 residues: Translation initiation factor IF-1 (72 aa).

Positions 1-72 (MAKEEAIEIE…TKGRITYRYK (72 aa)) constitute an S1-like domain.

This sequence belongs to the IF-1 family. As to quaternary structure, component of the 30S ribosomal translation pre-initiation complex which assembles on the 30S ribosome in the order IF-2 and IF-3, IF-1 and N-formylmethionyl-tRNA(fMet); mRNA recruitment can occur at any time during PIC assembly.

Its subcellular location is the cytoplasm. One of the essential components for the initiation of protein synthesis. Stabilizes the binding of IF-2 and IF-3 on the 30S subunit to which N-formylmethionyl-tRNA(fMet) subsequently binds. Helps modulate mRNA selection, yielding the 30S pre-initiation complex (PIC). Upon addition of the 50S ribosomal subunit IF-1, IF-2 and IF-3 are released leaving the mature 70S translation initiation complex. This is Translation initiation factor IF-1 from Chlorobium phaeobacteroides (strain DSM 266 / SMG 266 / 2430).